Consider the following 92-residue polypeptide: Small ribosomal subunit protein uS19 (92 aa).

It belongs to the universal ribosomal protein uS19 family.

Protein S19 forms a complex with S13 that binds strongly to the 16S ribosomal RNA. This is Small ribosomal subunit protein uS19 from Roseobacter denitrificans (strain ATCC 33942 / OCh 114) (Erythrobacter sp. (strain OCh 114)).